A 225-amino-acid polypeptide reads, in one-letter code: uncharacterized protein (225 aa).

The interval M1 to V48 is disordered. Basic and acidic residues predominate over residues P20–D29. The HTH merR-type domain maps to G64–H136. Positions D201–G225 are disordered. The span at R216–G225 shows a compositional bias: basic residues.

This is an uncharacterized protein from Mycobacterium tuberculosis (strain CDC 1551 / Oshkosh).